The sequence spans 388 residues: Chorismate synthase (388 aa).

Residues R39 and R45 each contribute to the NADP(+) site. The disordered stretch occupies residues 95–115 (EKQKKIRRVSKPRPGHADLVG). A compositionally biased stretch (basic residues) spans 98-108 (KKIRRVSKPRP). FMN-binding positions include 130 to 132 (RSS), 251 to 252 (NA), G296, 311 to 315 (KPIPT), and R337.

Belongs to the chorismate synthase family. Homotetramer. The cofactor is FMNH2.

The enzyme catalyses 5-O-(1-carboxyvinyl)-3-phosphoshikimate = chorismate + phosphate. The protein operates within metabolic intermediate biosynthesis; chorismate biosynthesis; chorismate from D-erythrose 4-phosphate and phosphoenolpyruvate: step 7/7. In terms of biological role, catalyzes the anti-1,4-elimination of the C-3 phosphate and the C-6 proR hydrogen from 5-enolpyruvylshikimate-3-phosphate (EPSP) to yield chorismate, which is the branch point compound that serves as the starting substrate for the three terminal pathways of aromatic amino acid biosynthesis. This reaction introduces a second double bond into the aromatic ring system. The chain is Chorismate synthase from Enterococcus faecalis (strain ATCC 700802 / V583).